A 360-amino-acid chain; its full sequence is Phospho-N-acetylmuramoyl-pentapeptide-transferase (360 aa).

The next 10 membrane-spanning stretches (helical) occupy residues 26–46, 74–94, 97–117, 134–154, 168–188, 199–219, 236–256, 263–283, 288–308, and 338–358; these read AILG…KLIE, MGGL…GDLG, YVWV…IDDY, YILQ…TAAN, VMPQ…VGSS, GLAI…AYLS, SGEL…FLWF, VFMG…IAVL, ILLV…ILQV, and VIVR…ATLK.

The protein belongs to the glycosyltransferase 4 family. MraY subfamily. Mg(2+) is required as a cofactor.

It is found in the cell inner membrane. It carries out the reaction UDP-N-acetyl-alpha-D-muramoyl-L-alanyl-gamma-D-glutamyl-meso-2,6-diaminopimeloyl-D-alanyl-D-alanine + di-trans,octa-cis-undecaprenyl phosphate = di-trans,octa-cis-undecaprenyl diphospho-N-acetyl-alpha-D-muramoyl-L-alanyl-D-glutamyl-meso-2,6-diaminopimeloyl-D-alanyl-D-alanine + UMP. Its pathway is cell wall biogenesis; peptidoglycan biosynthesis. Functionally, catalyzes the initial step of the lipid cycle reactions in the biosynthesis of the cell wall peptidoglycan: transfers peptidoglycan precursor phospho-MurNAc-pentapeptide from UDP-MurNAc-pentapeptide onto the lipid carrier undecaprenyl phosphate, yielding undecaprenyl-pyrophosphoryl-MurNAc-pentapeptide, known as lipid I. This chain is Phospho-N-acetylmuramoyl-pentapeptide-transferase, found in Shewanella putrefaciens (strain CN-32 / ATCC BAA-453).